A 142-amino-acid chain; its full sequence is Hemoglobin subunit theta-1 (142 aa).

One can recognise a Globin domain in the interval 2 to 142 (ALAAADRATV…VISALASDCR (141 aa)). Positions 59 and 88 each coordinate heme b.

The protein belongs to the globin family.

The chain is Hemoglobin subunit theta-1 (HBQ1) from Equus caballus (Horse).